Reading from the N-terminus, the 160-residue chain is Cytochrome c-type biogenesis protein CcmE (160 aa).

Over 1-8 (MNPRRKQR) the chain is Cytoplasmic. The helical; Signal-anchor for type II membrane protein transmembrane segment at 9 to 29 (LTWVAILVIGVSVATGLMLYA) threads the bilayer. Residues 30 to 160 (LSQSIDLFYT…PNTVEKGEGQ (131 aa)) lie on the Periplasmic side of the membrane. Residues His130 and Tyr134 each coordinate heme.

The protein belongs to the CcmE/CycJ family.

It is found in the cell inner membrane. Functionally, heme chaperone required for the biogenesis of c-type cytochromes. Transiently binds heme delivered by CcmC and transfers the heme to apo-cytochromes in a process facilitated by CcmF and CcmH. This chain is Cytochrome c-type biogenesis protein CcmE, found in Idiomarina loihiensis (strain ATCC BAA-735 / DSM 15497 / L2-TR).